Consider the following 667-residue polypeptide: DNA ligase (667 aa).

NAD(+) contacts are provided by residues 32–36 (DSEYD), 81–82 (SL), and E110. K112 acts as the N6-AMP-lysine intermediate in catalysis. NAD(+)-binding residues include R133, E167, K283, and K307. Residues C401, C404, C419, and C424 each coordinate Zn(2+). A BRCT domain is found at 586 to 667 (EGHPDFKDKT…FVQKQNEIEG (82 aa)).

This sequence belongs to the NAD-dependent DNA ligase family. LigA subfamily. Mg(2+) is required as a cofactor. It depends on Mn(2+) as a cofactor.

The enzyme catalyses NAD(+) + (deoxyribonucleotide)n-3'-hydroxyl + 5'-phospho-(deoxyribonucleotide)m = (deoxyribonucleotide)n+m + AMP + beta-nicotinamide D-nucleotide.. In terms of biological role, DNA ligase that catalyzes the formation of phosphodiester linkages between 5'-phosphoryl and 3'-hydroxyl groups in double-stranded DNA using NAD as a coenzyme and as the energy source for the reaction. It is essential for DNA replication and repair of damaged DNA. The chain is DNA ligase from Staphylococcus saprophyticus subsp. saprophyticus (strain ATCC 15305 / DSM 20229 / NCIMB 8711 / NCTC 7292 / S-41).